Here is a 274-residue protein sequence, read N- to C-terminus: Nuclease (274 aa).

The signal sequence occupies residues 1–24 (MGICGKLGVAALVALIVGCSPVQS). The active-site Proton acceptor is the His-124. The Mn(2+) site is built by Asn-155, Asp-246, Glu-249, Asp-255, Phe-256, Gln-265, and Glu-269.

The protein belongs to the DNA/RNA non-specific endonuclease family. Monomer. Mn(2+) is required as a cofactor. Mg(2+) serves as cofactor. It depends on Ca(2+) as a cofactor. The cofactor is Co(2+). Post-translationally, the N-terminus is blocked.

The protein localises to the periplasm. Functionally, catalyzes the degradation of both RNA and DNA; has the potential to act as an endonuclease. The chain is Nuclease (nucA) from Nostoc sp. (strain PCC 7120 / SAG 25.82 / UTEX 2576).